We begin with the raw amino-acid sequence, 442 residues long: MSGLAYLDLPAARLARGEVALPGSKSISNRVLLLAALAEGSTEITGLLDSDDTRVMLAALRQLGVSVGEVADGCVTIEGVARFPTEQAELFLGNAGTAFRPLTAALALMGGDYRLSGVPRMHERPIGDLVDALRQFGAGIEYLGQAGYPPLRIGGGSIRVDGPVRVEGSVSSQFLTALLMAAPVLARRSGQDITIEVVGELISKPYIEITLNLMARFGVSVRRDGWRAFTIARDAAYRGPGRMAIEGDASTASYFLALGAIGGGPVRVTGVGEDSIQGDVAFAATLAAMGADVRYGPGWIETRGVRVAEGGRLKAFDADFNLIPDAAMTAATLALYADGPCRLRNIGSWRVKETDRIHAMHTELEKLGAGVQSGADWLEVAPPAPGGWRDAHIGTWDDHRMAMCFSLAAFGPAAVRILDPGCVSKTFPDYFDVYAGLLAARD.

Lysine 25, serine 26, and arginine 30 together coordinate 3-phosphoshikimate. Phosphoenolpyruvate is bound at residue lysine 25. 2 residues coordinate phosphoenolpyruvate: glycine 96 and arginine 124. Residues serine 171, serine 172, glutamine 173, serine 203, aspartate 325, and lysine 352 each contribute to the 3-phosphoshikimate site. Glutamine 173 lines the phosphoenolpyruvate pocket. Residue aspartate 325 is the Proton acceptor of the active site. Positions 356, 400, and 425 each coordinate phosphoenolpyruvate.

Belongs to the EPSP synthase family. In terms of assembly, monomer.

The protein resides in the cytoplasm. It catalyses the reaction 3-phosphoshikimate + phosphoenolpyruvate = 5-O-(1-carboxyvinyl)-3-phosphoshikimate + phosphate. It participates in metabolic intermediate biosynthesis; chorismate biosynthesis; chorismate from D-erythrose 4-phosphate and phosphoenolpyruvate: step 6/7. In terms of biological role, catalyzes the transfer of the enolpyruvyl moiety of phosphoenolpyruvate (PEP) to the 5-hydroxyl of shikimate-3-phosphate (S3P) to produce enolpyruvyl shikimate-3-phosphate and inorganic phosphate. The sequence is that of 3-phosphoshikimate 1-carboxyvinyltransferase from Bordetella bronchiseptica (strain ATCC BAA-588 / NCTC 13252 / RB50) (Alcaligenes bronchisepticus).